A 1175-amino-acid polypeptide reads, in one-letter code: MEEDKIRALTTTLKPNETQAQKLLKAHIAVLVSALGGIDKTSEIVPPPYKLGHDALACLKDIKRWIRAVDERQHNYEVALACAESGLVQNDLIIILCQWDSQMQNKKQKTDTMVRNKTAMEKIMLSCLEILVLLTWPMEFGTNLSENQKLLFAQVRKIQVLHKKHILTYNDGQVLKAVIRLALPVIAKTRIDREPRDNQILRLVLYFTRNLLAIEPENDSISTKTNNKRATPSSNLPNGVSPDDISINNLLRVFKKNKVLMLLLTITGSINSEFEKDLFNEICLESVYLLIKGLEAKDVLVNKPTSTTKMNTKTAAAAATTATTATTTTTNTTSSVDISATTPLQPLSSTVGLQLQDLLNTEAKKRQSQKQHIATRHGKFGTLLSIRSADANSYVVSGEEALINSNGTMDKLDKSKTWKMKNHFTYDSDEFVKTNSPIYLNAQGRQILSYFIEEFLSGGCFNNLIESMTSKLTSQLEYSLIDELTQASYFYTIAWFLNYQREQITLSGLQTFDFGVVRAALSEVNFILIVAYFRDSHQKRLWNSLHVAMICFKELLHISNSIFGKKRARTTNDDTIGDDEQYEIDRELAEGIIRKLFSFNEFLNTLVQVPQIAYKHSPRFLAESIRVITIILKSFESFAKEDLQLYVQTKRRRNKKKQQRINELDRDTESKLSTAIYESDEELAQENLREVTRERKLNFQATEVRFFHQNVVTTYIEYMSRFEDLTHEDIKMCLTYFHKLFVVRKDYNGLFRLDFMQLIYKLRNHLPKGSPIRLKVDEFIYYFMKKFKLAITRFPNPLEILFPRFEETRFKHYLSTGELYQLDTAVDPRAIRNLNKEVIDNDYNDAVDNDNNNDNYNEDDEDGIAFEIEANPEAADNHAYDLDRLDELESQLTNYQSRNKNRSSLEKGIAKKRNSRKKSTKTSKVNSDGGDSDDDDDDADAAAAAKAHRKRRVPRDLLFEEPKPLRSAEFINDSDDESDDEKNAEFFAREERLRQLLNQTGNITDAQKLEEFKKVWQQYSKTGGSIMQDAVANAVKEVSLFISDGDDDDDDGNGNENQKGKRKRTRDEADDFDGVSTILDSVQSQVLDNGSSQGNFASDAEVYHASSNTSDTELETNKRAKIDDAEEKEDEGKGEKEEDDNADEDEDEDEDVDGEESFPVVHHKKKRAIISDDEE.

Disordered regions lie at residues 894–982 (NYQS…DDEK) and 1043–1175 (SDGD…DDEE). The segment covering 910 to 921 (AKKRNSRKKSTK) has biased composition (basic residues). Over residues 930 to 940 (GDSDDDDDDAD) the composition is skewed to acidic residues. The segment covering 954–966 (PRDLLFEEPKPLR) has biased composition (basic and acidic residues). Over residues 1044 to 1053 (DGDDDDDDGN) the composition is skewed to acidic residues. Polar residues predominate over residues 1078 to 1096 (ILDSVQSQVLDNGSSQGNF). Over residues 1137 to 1156 (EEDDNADEDEDEDEDVDGEE) the composition is skewed to acidic residues.

It belongs to the timeless family. In terms of assembly, component of the fork protection complex (FPC) consisting of TOF1 and CSM3.

The protein localises to the nucleus. Forms a fork protection complex (FPC) with CSM3 and which is required for chromosome segregation during meiosis and DNA damage repair. FPC coordinates leading and lagging strand synthesis and moves with the replication fork. FPC stabilizes replication forks in a configuration that is recognized by replication checkpoint sensors. This Lodderomyces elongisporus (strain ATCC 11503 / CBS 2605 / JCM 1781 / NBRC 1676 / NRRL YB-4239) (Yeast) protein is Topoisomerase 1-associated factor 1 (TOF1).